Reading from the N-terminus, the 885-residue chain is Lon protease homolog 2, peroxisomal (885 aa).

Positions Leu12–Leu256 constitute a Lon N-terminal domain. The segment at Leu70–Pro104 is disordered. Gly residues predominate over residues Ser77 to Val86. Positions Ser94 to Pro104 are enriched in basic and acidic residues. An ATP-binding site is contributed by Gly409–Thr416. Residues Val690–Gly875 enclose the Lon proteolytic domain. Residues Ser781 and Lys824 contribute to the active site. A Microbody targeting signal motif is present at residues Ser883 to Leu885.

This sequence belongs to the peptidase S16 family.

Its subcellular location is the peroxisome matrix. It carries out the reaction Hydrolysis of proteins in presence of ATP.. ATP-dependent serine protease that mediates the selective degradation of misfolded and unassembled polypeptides in the peroxisomal matrix. Necessary for type 2 peroxisome targeting signal (PTS2)-containing protein processing and facilitates peroxisome matrix protein import. The sequence is that of Lon protease homolog 2, peroxisomal (LON1) from Zea mays (Maize).